Consider the following 172-residue polypeptide: ATP synthase subunit b, chloroplastic (172 aa).

The chain crosses the membrane as a helical span at residues 15-37 (ILATNLINLSAVLGVLIFFGKGV).

Belongs to the ATPase B chain family. F-type ATPases have 2 components, F(1) - the catalytic core - and F(0) - the membrane proton channel. F(1) has five subunits: alpha(3), beta(3), gamma(1), delta(1), epsilon(1). F(0) has four main subunits: a(1), b(1), b'(1) and c(10-14). The alpha and beta chains form an alternating ring which encloses part of the gamma chain. F(1) is attached to F(0) by a central stalk formed by the gamma and epsilon chains, while a peripheral stalk is formed by the delta, b and b' chains.

It is found in the plastid. It localises to the chloroplast thylakoid membrane. F(1)F(0) ATP synthase produces ATP from ADP in the presence of a proton or sodium gradient. F-type ATPases consist of two structural domains, F(1) containing the extramembraneous catalytic core and F(0) containing the membrane proton channel, linked together by a central stalk and a peripheral stalk. During catalysis, ATP synthesis in the catalytic domain of F(1) is coupled via a rotary mechanism of the central stalk subunits to proton translocation. In terms of biological role, component of the F(0) channel, it forms part of the peripheral stalk, linking F(1) to F(0). This Pisum sativum (Garden pea) protein is ATP synthase subunit b, chloroplastic.